A 970-amino-acid polypeptide reads, in one-letter code: Transcriptional activator protein DAL81 (970 aa).

Disordered regions lie at residues 1-44 (MDPH…NHDI), 64-95 (NILR…QQQS), and 118-140 (DNVS…NNDI). Composition is skewed to low complexity over residues 15–41 (TKSV…NNSN), 73–94 (QQQQ…QQQQ), and 121–140 (SNSA…NNDI). Positions 150 to 179 (CNQCRLKKTKCNYFPDLGNCLECETSRTKC) form a DNA-binding region, zn(2)-C6 fungal-type. Over residues 807 to 823 (SFPNGTTSTTTPVNPTS) the composition is skewed to low complexity. The disordered stretch occupies residues 807–970 (SFPNGTTSTT…VTINTRETPL (164 aa)). Polar residues-rich tracts occupy residues 824-836 (RQTQ…SPAI) and 858-870 (KTSQ…TPSH). Residue Ser-833 is modified to Phosphoserine. Residues 875-894 (PPSNTSSPRVNSSTNVNSNT) show a composition bias toward low complexity. Residues 895 to 906 (QMNASPLTSINE) are compositionally biased toward polar residues. A compositionally biased stretch (basic and acidic residues) spans 907–938 (TRQESGDAADEKTAGRERTANEESSTELKDDN). Composition is skewed to polar residues over residues 939–954 (PNSN…QTIK) and 961–970 (VTINTRETPL).

It is found in the nucleus. In terms of biological role, positive regulation of genes required for catabolism of GABA (UGA4, UGA1, and UGA2), urea (DUR1 and DUR2), arginine and allantoin. This Saccharomyces cerevisiae (strain ATCC 204508 / S288c) (Baker's yeast) protein is Transcriptional activator protein DAL81 (DAL81).